We begin with the raw amino-acid sequence, 92 residues long: Acylphosphatase (92 aa).

One can recognise an Acylphosphatase-like domain in the interval 5-92 (RVHIIVSGLV…TSCREFRILT (88 aa)). Residues arginine 20 and asparagine 38 contribute to the active site.

The protein belongs to the acylphosphatase family.

It catalyses the reaction an acyl phosphate + H2O = a carboxylate + phosphate + H(+). This is Acylphosphatase (acyP) from Chlorobaculum tepidum (strain ATCC 49652 / DSM 12025 / NBRC 103806 / TLS) (Chlorobium tepidum).